Here is a 332-residue protein sequence, read N- to C-terminus: DNA repair and recombination protein RadA (332 aa).

126–133 (GEFGSGKT) contacts ATP.

This sequence belongs to the eukaryotic RecA-like protein family.

Functionally, involved in DNA repair and in homologous recombination. Binds and assemble on single-stranded DNA to form a nucleoprotein filament. Hydrolyzes ATP in a ssDNA-dependent manner and promotes DNA strand exchange between homologous DNA molecules. In Pyrobaculum calidifontis (strain DSM 21063 / JCM 11548 / VA1), this protein is DNA repair and recombination protein RadA.